The primary structure comprises 435 residues: 3-phosphoshikimate 1-carboxyvinyltransferase (435 aa).

Residues K28, S29, and R33 each contribute to the 3-phosphoshikimate site. K28 serves as a coordination point for phosphoenolpyruvate. Residues G100 and R128 each contribute to the phosphoenolpyruvate site. Residues S173, Q175, D321, and K348 each contribute to the 3-phosphoshikimate site. Q175 lines the phosphoenolpyruvate pocket. Catalysis depends on D321, which acts as the Proton acceptor. 2 residues coordinate phosphoenolpyruvate: R352 and R394.

This sequence belongs to the EPSP synthase family. In terms of assembly, monomer.

It is found in the cytoplasm. It carries out the reaction 3-phosphoshikimate + phosphoenolpyruvate = 5-O-(1-carboxyvinyl)-3-phosphoshikimate + phosphate. Its pathway is metabolic intermediate biosynthesis; chorismate biosynthesis; chorismate from D-erythrose 4-phosphate and phosphoenolpyruvate: step 6/7. In terms of biological role, catalyzes the transfer of the enolpyruvyl moiety of phosphoenolpyruvate (PEP) to the 5-hydroxyl of shikimate-3-phosphate (S3P) to produce enolpyruvyl shikimate-3-phosphate and inorganic phosphate. This is 3-phosphoshikimate 1-carboxyvinyltransferase from Desulfitobacterium hafniense (strain DSM 10664 / DCB-2).